We begin with the raw amino-acid sequence, 380 residues long: Variant-surface-glycoprotein phospholipase C (380 aa).

The PI-PLC X-box domain maps to Ile31 to Gly205.

Monomer.

It localises to the membrane. The catalysed reaction is a 6-(alpha-D-glucosaminyl)-1-(1,2-diacyl-sn-glycero-3-phospho)-1D-myo-inositol = 6-(alpha-D-glucosaminyl)-1D-myo-inositol 1,2-cyclic phosphate + a 1,2-diacyl-sn-glycerol. In terms of biological role, by hydrolysis of the attached glycolipid, releases soluble variant surface glycoprotein containing phosphoinositol from the cell wall of T.brucei after cell lysis. It also cleaves similar membrane anchors on some mammalian proteins. VSG lipase may play a role in processes such as parasite differentiation or antigenic variation. This chain is Variant-surface-glycoprotein phospholipase C, found in Trypanosoma cruzi.